Consider the following 212-residue polypeptide: Thymidylate kinase (212 aa).

10 to 17 (GPEGAGKT) is an ATP binding site.

The protein belongs to the thymidylate kinase family.

The catalysed reaction is dTMP + ATP = dTDP + ADP. In terms of biological role, phosphorylation of dTMP to form dTDP in both de novo and salvage pathways of dTTP synthesis. The chain is Thymidylate kinase from Bacillus licheniformis (strain ATCC 14580 / DSM 13 / JCM 2505 / CCUG 7422 / NBRC 12200 / NCIMB 9375 / NCTC 10341 / NRRL NRS-1264 / Gibson 46).